Reading from the N-terminus, the 187-residue chain is Phosphatidylethanolamine-binding protein 1 (187 aa).

Phosphoserine occurs at positions 6 and 13. T42 bears the Phosphothreonine mark. S52, S54, S98, and S153 each carry phosphoserine. The interval 93-134 (KGNDISSGTVLSDYVGSGPPKGTGLHRYVWLVYEQDRPLKCD) is interaction with RAF1.

The protein belongs to the phosphatidylethanolamine-binding protein family. In terms of assembly, has a tendency to form dimers by disulfide cross-linking. Interacts with RAF1 and this interaction is enhanced if RAF1 is phosphorylated on residues 'Ser-338', 'Ser-339', 'Tyr-340' and 'Tyr-341'. Interacts with ALOX15; in response to IL13/interleukin-13, prevents the interaction of PEBP1 with RAF1 to activate the ERK signaling cascade.

Its subcellular location is the cytoplasm. Its function is as follows. Binds ATP, opioids and phosphatidylethanolamine. Has lower affinity for phosphatidylinositol and phosphatidylcholine. Serine protease inhibitor which inhibits thrombin, neuropsin and chymotrypsin but not trypsin, tissue type plasminogen activator and elastase. Inhibits the kinase activity of RAF1 by inhibiting its activation and by dissociating the RAF1/MEK complex and acting as a competitive inhibitor of MEK phosphorylation. In terms of biological role, HCNP may be involved in the function of the presynaptic cholinergic neurons of the central nervous system. HCNP increases the production of choline acetyltransferase but not acetylcholinesterase. Seems to be mediated by a specific receptor. The sequence is that of Phosphatidylethanolamine-binding protein 1 (PEBP1) from Pongo abelii (Sumatran orangutan).